Reading from the N-terminus, the 424-residue chain is Tyrosine--tRNA ligase (424 aa).

L-tyrosine is bound at residue Tyr-37. The 'HIGH' region signature appears at 42–51 (PTADSLHLGH). Lys-144 bears the N6-acetyllysine mark. Tyr-175 and Gln-179 together coordinate L-tyrosine. The short motif at 235-239 (KFGKT) is the 'KMSKS' region element. Lys-238 provides a ligand contact to ATP. The S4 RNA-binding domain occupies 357–414 (ADLMQALVDSELQPSRGQARKTIASNAITINGEKQSDPEYFFKEEDRLFGRFTLLRRG).

This sequence belongs to the class-I aminoacyl-tRNA synthetase family. TyrS type 1 subfamily. In terms of assembly, homodimer.

The protein resides in the cytoplasm. The enzyme catalyses tRNA(Tyr) + L-tyrosine + ATP = L-tyrosyl-tRNA(Tyr) + AMP + diphosphate + H(+). In terms of biological role, catalyzes the attachment of tyrosine to tRNA(Tyr) in a two-step reaction: tyrosine is first activated by ATP to form Tyr-AMP and then transferred to the acceptor end of tRNA(Tyr). The protein is Tyrosine--tRNA ligase of Shigella boydii serotype 4 (strain Sb227).